The chain runs to 384 residues: Ferrochelatase, mitochondrial (384 aa).

Cysteine 156 contributes to the [2Fe-2S] cluster binding site. Residues histidine 190 and asparagine 343 contribute to the active site. [2Fe-2S] cluster-binding residues include cysteine 363, cysteine 366, and cysteine 371.

This sequence belongs to the ferrochelatase family. In terms of assembly, homodimer. Homotetramer. The cofactor is [2Fe-2S] cluster.

It is found in the mitochondrion inner membrane. The enzyme catalyses heme b + 2 H(+) = protoporphyrin IX + Fe(2+). It participates in porphyrin-containing compound metabolism; protoheme biosynthesis; protoheme from protoporphyrin-IX: step 1/1. Catalyzes the ferrous insertion into protoporphyrin IX. Terminal enzyme in heme biosynthesis. Contains four conserved cysteines that function as cluster ligands and play a crucial role in maintaining protein structure. The chain is Ferrochelatase, mitochondrial from Drosophila melanogaster (Fruit fly).